Reading from the N-terminus, the 200-residue chain is MKLKSIMSQCQFIIGATSIKSLPDFSIPEVALAGRSNVGKSSLINAITNNRKNARISSKPGCTRQINFYLINKGLMVLVDLPGYGYSKADRATVNSYICLMEYYLLNRKNLSKVVLLIDAKVGFKEIDLDFIRWLEVHQILYQLVLTKIDRVQSNVLDVIVSDIQNFNLNFIIYPIINVSSKCKQGIEELIYEIAQCIKK.

The EngB-type G domain maps to 26–200 (SIPEVALAGR…IYEIAQCIKK (175 aa)). GTP contacts are provided by residues 34–41 (GRSNVGKS), 61–65 (GCTRQ), 80–83 (DLPG), 147–150 (TKID), and 179–181 (VSS). Residues serine 41 and threonine 63 each coordinate Mg(2+).

Belongs to the TRAFAC class TrmE-Era-EngA-EngB-Septin-like GTPase superfamily. EngB GTPase family. Requires Mg(2+) as cofactor.

Functionally, necessary for normal cell division and for the maintenance of normal septation. This chain is Probable GTP-binding protein EngB, found in Ehrlichia ruminantium (strain Welgevonden).